The primary structure comprises 380 residues: Large ribosomal subunit protein mL38 (380 aa).

The transit peptide at 1–26 directs the protein to the mitochondrion; that stretch reads MAAPWWRAALCECRRWRGFSTSAVLG. Residues 99 to 127 adopt a coiled-coil conformation; sequence RTQQLLERKQAIQELRANVEEERAARLRT.

It belongs to the phosphatidylethanolamine-binding protein family. Mitochondrion-specific ribosomal protein mL38 subfamily. Component of the mitochondrial large ribosomal subunit (mt-LSU). Mature mammalian 55S mitochondrial ribosomes consist of a small (28S) and a large (39S) subunit. The 28S small subunit contains a 12S ribosomal RNA (12S mt-rRNA) and 30 different proteins. The 39S large subunit contains a 16S rRNA (16S mt-rRNA), a copy of mitochondrial valine transfer RNA (mt-tRNA(Val)), which plays an integral structural role, and 52 different proteins. mL38 is located at the central protuberance.

It is found in the mitochondrion. The chain is Large ribosomal subunit protein mL38 (MRPL38) from Homo sapiens (Human).